The primary structure comprises 280 residues: Apoptosis regulator ced-9 (280 aa).

The interval 33-59 (GTEPTDFGINSDAQDLPSPSRQASTRR) is disordered. Positions 43 to 59 (SDAQDLPSPSRQASTRR) are enriched in polar residues. Residues 80-99 (IEGFVVDYFTHRIRQNGMEW) carry the BH4 motif. Positions 160 to 179 (QTDQCPMSYGRLIGLISFGG) match the BH1 motif. The short motif at 213–229 (NWKEHNRSWDDFMTLGK) is the BH2 element.

The protein belongs to the Bcl-2 family. As to quaternary structure, interacts with asymmetric homodimer ced-4; the interaction sequesters ced-4. Interacts with egl-1; the interaction results in ced-4 release. Interacts with dre-1; the interaction inhibits ced-9 activity, either directly or indirectly. Interacts with dct-1. May form a complex composed of ced-9, ced-4 and mac-1. Interacts with dynamin-related protein drp-1 (via residues 280-502); the interaction is enhanced by GTP rather than GDP; the interaction is probably direct and may occur at the mitochondrion. Interaction with drp-1 may be enhanced by interaction of ced-9 with egl-1, but not with ced-4. A ced-9/egl-1 complex may recruit drp-1 to the mitochondrial surface. Interacts with fzo-1; interaction may be suppressed by interaction of ced-9 with egl-1.

Its subcellular location is the perikaryon. It localises to the synapse. It is found in the endomembrane system. The protein resides in the mitochondrion membrane. The protein localises to the cytoplasm. In terms of biological role, plays a major role in programmed cell death (PCD, apoptosis). egl-1 binds to and directly inhibits the activity of ced-9, releasing the cell death activator ced-4 from a ced-9/ced-4 containing protein complex and allowing ced-4 to activate the cell-killing caspase ced-3. During larval development, required for the elimination of transient presynaptic components downstream of egl-1 and upstream of ced-4 and ced-3 apoptotic pathway. Has been shown in one study to be dispensable in mitochondrial dynamics and morphology during early embryonic development. However, another study shows that a egl-1/ced-9 containing complex may promote drp-1-dependent mitochondrial fission. The protein is Apoptosis regulator ced-9 (ced-9) of Caenorhabditis elegans.